An 86-amino-acid polypeptide reads, in one-letter code: Small ribosomal subunit protein bS20 (86 aa).

Residues 1–26 form a disordered region; that stretch reads MANIKSAKKRALQSEKSRKHNASRRT.

Belongs to the bacterial ribosomal protein bS20 family.

Functionally, binds directly to 16S ribosomal RNA. The sequence is that of Small ribosomal subunit protein bS20 from Psychromonas ingrahamii (strain DSM 17664 / CCUG 51855 / 37).